We begin with the raw amino-acid sequence, 123 residues long: Cysteine-rich DPF motif domain-containing protein 1 (123 aa).

The segment at Arg-102–Thr-123 is disordered. Positions Arg-114 to Thr-123 are enriched in polar residues.

The protein belongs to the CDPF1 family.

This chain is Cysteine-rich DPF motif domain-containing protein 1 (CDPF1), found in Homo sapiens (Human).